Consider the following 72-residue polypeptide: Conotoxin Lt6.3 (72 aa).

The first 22 residues, 1–22 (MKLTSVVIVAVLFLAACQLTTS), serve as a signal peptide directing secretion. The propeptide occupies 23-46 (DGSRGTWKDRAVRSITKVSMLRWP). Intrachain disulfides connect cysteine 47–cysteine 61, cysteine 54–cysteine 64, and cysteine 60–cysteine 71.

The protein belongs to the conotoxin O1 superfamily. In terms of tissue distribution, expressed by the venom duct.

Its subcellular location is the secreted. In Conus litteratus (Lettered cone), this protein is Conotoxin Lt6.3.